The sequence spans 385 residues: Probable di-N-acetylchitobiase 2 (385 aa).

Positions 1–15 (MRIILLLFLIVFVVA) are cleaved as a signal peptide. The GH18 domain maps to 16–377 (QSSSSSSSSG…DALASFFPQS (362 aa)). Asparagine 51 and asparagine 101 each carry an N-linked (GlcNAc...) asparagine glycan. Glutamate 129 acts as the Proton donor in catalysis. Residues asparagine 223, asparagine 272, and asparagine 296 are each glycosylated (N-linked (GlcNAc...) asparagine).

Belongs to the glycosyl hydrolase 18 family.

It is found in the lysosome. Involved in the degradation of asparagine-linked glycoproteins. May hydrolyze of N-acetyl-beta-D-glucosamine (1-4)N-acetylglucosamine chitobiose core from the reducing end of the bond. The polypeptide is Probable di-N-acetylchitobiase 2 (ctbs2) (Dictyostelium discoideum (Social amoeba)).